Here is a 346-residue protein sequence, read N- to C-terminus: Very-long-chain 3-oxoacyl-CoA reductase (346 aa).

A helical membrane pass occupies residues 19 to 39 (VLLGALLVGVFKLTVFILSVT). Valine 65, aspartate 119, asparagine 146, tyrosine 220, lysine 224, valine 253, and serine 255 together coordinate NADP(+). Tyrosine 220 acts as the Proton donor in catalysis. Lysine 224 acts as the Lowers pKa of active site Tyr in catalysis.

Belongs to the short-chain dehydrogenases/reductases (SDR) family.

The protein localises to the endoplasmic reticulum membrane. It catalyses the reaction a very-long-chain (3R)-3-hydroxyacyl-CoA + NADP(+) = a very-long-chain 3-oxoacyl-CoA + NADPH + H(+). Its pathway is lipid metabolism; fatty acid biosynthesis. In terms of biological role, component of the microsomal membrane bound fatty acid elongation system, which produces the 26-carbon very long-chain fatty acids (VLCFA) from palmitate. Catalyzes the reduction of the 3-ketoacyl-CoA intermediate that is formed in each cycle of fatty acid elongation. VLCFAs serve as precursors for ceramide and sphingolipids. The protein is Very-long-chain 3-oxoacyl-CoA reductase of Scheffersomyces stipitis (strain ATCC 58785 / CBS 6054 / NBRC 10063 / NRRL Y-11545) (Yeast).